The following is a 149-amino-acid chain: Large ribosomal subunit protein uL13 (149 aa).

The protein belongs to the universal ribosomal protein uL13 family. Part of the 50S ribosomal subunit.

In terms of biological role, this protein is one of the early assembly proteins of the 50S ribosomal subunit, although it is not seen to bind rRNA by itself. It is important during the early stages of 50S assembly. In Chlamydia pneumoniae (Chlamydophila pneumoniae), this protein is Large ribosomal subunit protein uL13.